The sequence spans 81 residues: Costars family protein ABRACL (81 aa).

An N-acetylmethionine modification is found at Met1.

This sequence belongs to the costars family.

The protein is Costars family protein ABRACL (ABRACL) of Homo sapiens (Human).